The following is a 260-amino-acid chain: MLAIISPAKTLDFETPAPNFPFANSQPKLTAYSQQLIDICKQFSPAELGSLMSISDKLASLNVARFAEWQLAHNEQNAKAALFAFKGDVYTGLDAETLTQAQVEYAQVHLRMLSGLYGLLKPLDLMQPYRLEMGTKLVNPKGKDLYAFWGDIITQHLQTAMDEQGDNILVNLASDEYYGAVKPQKLQATIIKPVFLDEKNGKFKQISFYAKKARGMMVRFILETQPTSVEQLKAFNYGSYWFDEDASGATELVFKREEQA.

Belongs to the UPF0246 family.

The polypeptide is UPF0246 protein APJL_0596 (Actinobacillus pleuropneumoniae serotype 3 (strain JL03)).